Reading from the N-terminus, the 355-residue chain is Probable dual-specificity RNA methyltransferase RlmN (355 aa).

The segment at 1–20 is disordered; it reads MSATPVTQLTPSSQPQQPCS. Glutamate 107 serves as the catalytic Proton acceptor. The region spanning 113-341 is the Radical SAM core domain; that stretch reads TDKRLTVCVS…VSVRYSRGLE (229 aa). A disulfide bond links cysteine 120 and cysteine 346. Cysteine 127, cysteine 131, and cysteine 134 together coordinate [4Fe-4S] cluster. S-adenosyl-L-methionine is bound by residues 174–175, serine 204, 227–229, and asparagine 303; these read GE and SLH. Cysteine 346 serves as the catalytic S-methylcysteine intermediate.

This sequence belongs to the radical SAM superfamily. RlmN family. Requires [4Fe-4S] cluster as cofactor.

Its subcellular location is the cytoplasm. The catalysed reaction is adenosine(2503) in 23S rRNA + 2 reduced [2Fe-2S]-[ferredoxin] + 2 S-adenosyl-L-methionine = 2-methyladenosine(2503) in 23S rRNA + 5'-deoxyadenosine + L-methionine + 2 oxidized [2Fe-2S]-[ferredoxin] + S-adenosyl-L-homocysteine. It carries out the reaction adenosine(37) in tRNA + 2 reduced [2Fe-2S]-[ferredoxin] + 2 S-adenosyl-L-methionine = 2-methyladenosine(37) in tRNA + 5'-deoxyadenosine + L-methionine + 2 oxidized [2Fe-2S]-[ferredoxin] + S-adenosyl-L-homocysteine. In terms of biological role, specifically methylates position 2 of adenine 2503 in 23S rRNA and position 2 of adenine 37 in tRNAs. This is Probable dual-specificity RNA methyltransferase RlmN from Nostoc sp. (strain PCC 7120 / SAG 25.82 / UTEX 2576).